Reading from the N-terminus, the 412-residue chain is Squamosa promoter-binding-like protein 2 (412 aa).

The disordered stretch occupies residues 1–81 (MDWDAKMPSW…AAAAGKRARA (81 aa)). Residues 18-31 (PSGGGGGGGGGGGA) show a composition bias toward gly residues. Low complexity-rich tracts occupy residues 48–57 (VSAASAAPAA) and 67–81 (SSSSSAAAAGKRARA). An SBP-type zinc finger spans residues 89 to 167 (VPACSVEGCA…DGHNKRRRKP (79 aa)). Zn(2+) is bound by residues C92, C97, C115, H118, C134, C137, H141, and C153. The Bipartite nuclear localization signal signature appears at 150–166 (KRSCRKRLDGHNKRRRK).

Expressed in stems, leaf sheaths, and young panicles.

The protein resides in the nucleus. Trans-acting factor that binds specifically to the consensus nucleotide sequence 5'-TNCGTACAA-3'. May be involved in panicle development. The protein is Squamosa promoter-binding-like protein 2 (SPL2) of Oryza sativa subsp. japonica (Rice).